Here is a 674-residue protein sequence, read N- to C-terminus: MYLSLLLLPMFGSAVTGLLGRKIGVTGAHIITCSCLITSAILAIVAFYEVGLCNSSVSINLISWIDSELMDVSWGFMFDSLTVSMLLPVLVVSSLVHIFSVDYMSADPHNQRFFAYLSMFTFFMLVLVTGDNYLIMFVGWEGIGISSYLLINFWFTRIQANKSAIKALVVNRVGDMFLSIGFFAIFFVFGNLDYSTVFSIAPFINETIITIIGLLLLLAAMGKSAQLGLHTWLPDPSMEGPTPVSALIHAATLVTAGVYLLLRSSPVIEYGPTTLIVITWVGALTAFFAASTGLLQNDLKRVIAYSTCSQMGYLFMACGLSQYNVALFHLVNHAFFKALLFLAAGAVLHATYDQQDQRRLGGLIGFLPFTYTAILIGSLSLIALPWLTGFYSKDLILEVAYGQYEFSGQVAYWLGTLSACLTAFYSLRLISLTFLTYPNASKSVYLHTHDAPTIVMIPLIILSLLAIFFGYVARDLFVGMGSDFLSPSLFTHPSHITLIEAEFGLPQIIKLLPAIGTLLGAGLALYLYHMLPVFTIDLTNSTLGQKLYRFFNGKYYVDVIYNHYIIYGGLQLGYVISKVLDRGIIELVGPYGLATGLTSGSKDIAKLDTGNLTSYALYLAIALVTLIMILLSPVLLNAALINAPLILVLLVAMVCIPYINSSSNDTVTTVQVKL.

17 helical membrane passes run 27 to 47, 81 to 101, 113 to 133, 135 to 155, 173 to 193, 200 to 220, 242 to 262, 275 to 295, 301 to 323, 325 to 345, 363 to 383, 410 to 430, 453 to 473, 514 to 534, 556 to 576, 616 to 636, and 639 to 659; these read GAHI…IVAF, LTVS…IFSV, FFAY…GDNY, IMFV…NFWF, VGDM…GNLD, IAPF…LLAA, TPVS…YLLL, LIVI…TGLL, RVIA…LSQY, VALF…LAAG, LIGF…SLIA, VAYW…LRLI, TIVM…GYVA, AIGT…LPVF, YVDV…GYVI, ALYL…PVLL, and ALIN…IPYI.

Belongs to the complex I subunit 5 family.

Its subcellular location is the mitochondrion inner membrane. It catalyses the reaction a ubiquinone + NADH + 5 H(+)(in) = a ubiquinol + NAD(+) + 4 H(+)(out). Core subunit of the mitochondrial membrane respiratory chain NADH dehydrogenase (Complex I) that is believed to belong to the minimal assembly required for catalysis. Complex I functions in the transfer of electrons from NADH to the respiratory chain. The immediate electron acceptor for the enzyme is believed to be ubiquinone. This chain is NADH-ubiquinone oxidoreductase chain 5 (ND5), found in Mycosarcoma maydis (Corn smut fungus).